The sequence spans 875 residues: Metal transporter CNNM2 (875 aa).

Residues 1 to 250 (MIGCGACEPE…TKMIVGEEKK (250 aa)) are Extracellular-facing. A glycan (N-linked (GlcNAc...) asparagine) is linked at N112. The segment at 122–148 (EHERRRHTPGERGLGGPAPPEPDSGPQ) is disordered. A helical membrane pass occupies residues 251 to 271 (FLLPFWLQVIFISLLLCLSGM). Residues 251–431 (FLLPFWLQVI…DPYNDLVKEE (181 aa)) enclose the CNNM transmembrane domain. Residues 272–313 (FSGLNLGLMALDPMELRIVQNCGTEKEKNYAKRIEPVRRQGN) lie on the Cytoplasmic side of the membrane. Residues 314–334 (YLLCSLLLGNVLVNTTLTILL) constitute an intramembrane region (helical). Residues 335 to 338 (DDIA) are Cytoplasmic-facing. The helical transmembrane segment at 339–359 (GSGLVAVVVSTIGIVIFGEIV) threads the bilayer. Residues 360 to 368 (PQAICSRHG) are Extracellular-facing. A helical membrane pass occupies residues 369-389 (LAVGANTIFLTKFFMMMTFPA). Residues 390–875 (SYPVSKLLDC…NHSLHSEGAI (486 aa)) lie on the Cytoplasmic side of the membrane. CBS domains lie at 450–511 (MTPL…CTPL) and 518–584 (YNHP…ILDE). Positions 741–763 (AGSPGENKSPPRPCGLNHSDSLS) are disordered. A Phosphoserine modification is found at S761.

This sequence belongs to the ACDP family.

It localises to the cell membrane. Its function is as follows. Divalent metal cation transporter. Mediates transport of divalent metal cations in an order of Mg(2+) &gt; Co(2+) &gt; Mn(2+) &gt; Sr(2+) &gt; Ba(2+) &gt; Cu(2+) &gt; Fe(2+). The polypeptide is Metal transporter CNNM2 (Cnnm2) (Rattus norvegicus (Rat)).